The chain runs to 491 residues: Aspartyl/glutamyl-tRNA(Asn/Gln) amidotransferase subunit B (491 aa).

Belongs to the GatB/GatE family. GatB subfamily. Heterotrimer of A, B and C subunits.

It catalyses the reaction L-glutamyl-tRNA(Gln) + L-glutamine + ATP + H2O = L-glutaminyl-tRNA(Gln) + L-glutamate + ADP + phosphate + H(+). The enzyme catalyses L-aspartyl-tRNA(Asn) + L-glutamine + ATP + H2O = L-asparaginyl-tRNA(Asn) + L-glutamate + ADP + phosphate + 2 H(+). Its function is as follows. Allows the formation of correctly charged Asn-tRNA(Asn) or Gln-tRNA(Gln) through the transamidation of misacylated Asp-tRNA(Asn) or Glu-tRNA(Gln) in organisms which lack either or both of asparaginyl-tRNA or glutaminyl-tRNA synthetases. The reaction takes place in the presence of glutamine and ATP through an activated phospho-Asp-tRNA(Asn) or phospho-Glu-tRNA(Gln). The protein is Aspartyl/glutamyl-tRNA(Asn/Gln) amidotransferase subunit B of Prochlorococcus marinus (strain NATL1A).